A 307-amino-acid polypeptide reads, in one-letter code: D-alanine--D-alanine ligase (307 aa).

The ATP-grasp domain maps to 105-304 (KMLWKGFGLP…FEKLVEKILE (200 aa)). Residue 135 to 190 (VARLGLPLMVKPSREGSSVGLTKVDSADKLKSAVDLALKFDDIVLIEEWLSGDELT) participates in ATP binding. The Mg(2+) site is built by aspartate 258, glutamate 271, and asparagine 273.

It belongs to the D-alanine--D-alanine ligase family. Mg(2+) serves as cofactor. Requires Mn(2+) as cofactor.

It is found in the cytoplasm. The enzyme catalyses 2 D-alanine + ATP = D-alanyl-D-alanine + ADP + phosphate + H(+). It functions in the pathway cell wall biogenesis; peptidoglycan biosynthesis. Its function is as follows. Cell wall formation. The polypeptide is D-alanine--D-alanine ligase (Actinobacillus succinogenes (strain ATCC 55618 / DSM 22257 / CCUG 43843 / 130Z)).